Consider the following 172-residue polypeptide: Stellate protein CG33236/CG33240/CG33244/CG33245 (172 aa).

The protein belongs to the casein kinase 2 subunit beta family. In terms of assembly, interacts in vitro with the casein kinase 2 alpha subunit (CkII-alpha). The relevance of such interaction is however unclear in vivo. In terms of tissue distribution, probably not expressed in wild-type flies. In males lacking the Y chromosome, it is testis-specific and constitutes the main component of star-shaped crystals.

Its function is as follows. Unknown. In males lacking the Y chromosome, its strong overexpression leads to the appearance of proteinaceous star-shaped crystals in the primary spermatocytes causing meiotic drive, possibly by interfering with normal casein kinase 2 activity. This is Stellate protein CG33236/CG33240/CG33244/CG33245 (Ste:CG33236) from Drosophila melanogaster (Fruit fly).